A 198-amino-acid chain; its full sequence is Protein ORFi in retron Ec67 (198 aa).

It belongs to the CI repressor protein family.

This Escherichia coli protein is Protein ORFi in retron Ec67.